The sequence spans 331 residues: Type 2 lactosamine alpha-2,3-sialyltransferase (331 aa).

The Cytoplasmic portion of the chain corresponds to 1-4 (MRGY). A helical; Signal-anchor for type II membrane protein membrane pass occupies residues 5–25 (LVAIFLSAVFLYYVLHCILWG). Topologically, residues 26-331 (TNVYWVAPVE…KNLVINLTQD (306 aa)) are lumenal. Asn129, Asn181, Asn282, Asn295, Asn308, and Asn327 each carry an N-linked (GlcNAc...) asparagine glycan.

This sequence belongs to the glycosyltransferase 29 family. As to expression, ubiquitous.

It localises to the golgi apparatus membrane. It catalyses the reaction a neolactoside nLc4Cer(d18:1(4E)) + CMP-N-acetyl-beta-neuraminate = a neolactoside IV(3)-alpha-NeuAc-nLc4Cer(d18:1(4E)) + CMP + H(+). It carries out the reaction a beta-D-galactosyl-(1-&gt;4)-N-acetyl-beta-D-glucosaminyl derivative + CMP-N-acetyl-beta-neuraminate = an N-acetyl-alpha-neuraminyl-(2-&gt;3)-beta-D-galactosyl-(1-&gt;4)-N-acetyl-beta-D-glucosaminyl derivative + CMP + H(+). The enzyme catalyses a neolactoside nLc6Cer(d18:1(4E)) + CMP-N-acetyl-beta-neuraminate = a neolactoside VI(3)-alpha-NeuNAc-nLc6Cer(d18:1(4E)) + CMP + H(+). Functionally, transfers the sialyl residue from CMP-N-acetyl-beta-neuraminate to the terminal galactose residue on sugar chains of glycoproteins and glycolipids. It's alpha-2,3-sialyltransferase activity is specific toward type II glycan chains (Galbeta1-4GlcNAc) on glycoproteins and glycolipids such as neolactosides nLc4Cer and nLc6Cer, whose sialyl-products serve as precursors for the Lewis X antigen. Critically involved in the synthesis of functional selectin ligands needed for neutrophil recruitment during inflammation and lymphocyte homing to the lymph nodes. This is Type 2 lactosamine alpha-2,3-sialyltransferase (ST3GAL6) from Homo sapiens (Human).